A 466-amino-acid chain; its full sequence is Sucrose-6-phosphate hydrolase (466 aa).

Substrate-binding positions include 38–41 (LMND), Gln57, 100–101 (YS), 159–160 (RD), and Glu218. Asp41 is an active-site residue.

It belongs to the glycosyl hydrolase 32 family.

It localises to the cytoplasm. The catalysed reaction is Hydrolysis of terminal non-reducing beta-D-fructofuranoside residues in beta-D-fructofuranosides.. It functions in the pathway glycan biosynthesis; sucrose metabolism. In terms of biological role, enables the bacterium to metabolize sucrose as a sole carbon source. This Salmonella typhimurium protein is Sucrose-6-phosphate hydrolase (scrB).